We begin with the raw amino-acid sequence, 2194 residues long: Genome polyprotein (2194 aa).

Gly-2 is lipidated: N-myristoyl glycine; by host. Topologically, residues 2 to 1504 (GAQVSTQKTG…HVSRAFICLQ (1503 aa)) are cytoplasmic. The amphipathic alpha-helix stretch occupies residues 566–582 (LYQNDPEGALNKAVGRV). Residues His-881 and Asp-899 each act as for protease 2A activity in the active site. 2 residues coordinate Zn(2+): Cys-916 and Cys-918. Catalysis depends on Cys-970, which acts as the For protease 2A activity. Positions 976 and 978 each coordinate Zn(2+). Residues 1110-1182 (NNNWLKKFTE…EQSAPSQSDQ (73 aa)) are membrane-binding. The tract at residues 1110–1248 (NNNWLKKFTE…SPGAGKSVAT (139 aa)) is oligomerization. The RNA-binding stretch occupies residues 1131 to 1135 (AIKIQ). Positions 1214 to 1370 (EKKMSNYIQF…SMYSQNGKIN (157 aa)) constitute an SF3 helicase domain. 3 residues coordinate Zn(2+): Cys-1378, Cys-1390, and Cys-1395. The C4-type; degenerate zinc finger occupies 1378 to 1395 (CDEECCPVNFKRCCPLVC). The interval 1422–1429 (EYNHRHSV) is RNA-binding. An oligomerization region spans residues 1433 to 1438 (LEALFQ). The stretch at 1505 to 1520 (ALTTFVSVAGIIYIIY) is an intramembrane region. The Cytoplasmic segment spans residues 1521 to 2194 (KLFAGFQGAY…TLRRKWLDSF (674 aa)). Tyr-1530 bears the O-(5'-phospho-RNA)-tyrosine mark. Positions 1550-1728 (GPAFEFAVAM…FSAALLRHYF (179 aa)) constitute a Peptidase C3 domain. Catalysis depends on for protease 3C activity residues His-1589, Glu-1620, and Cys-1696. Positions 1959 to 2075 (GHLIAFDYSG…SYPHPIDASL (117 aa)) constitute a RdRp catalytic domain. Positions 1965 and 2061 each coordinate Mg(2+).

It belongs to the picornaviruses polyprotein family. In terms of assembly, interacts with capsid protein VP1 and capsid protein VP3 to form heterotrimeric protomers. Interacts with capsid protein VP0, and capsid protein VP3 to form heterotrimeric protomers. Five protomers subsequently associate to form pentamers which serve as building blocks for the capsid. Interacts with capsid protein VP2, capsid protein VP3 and capsid protein VP4 following cleavage of capsid protein VP0. As to quaternary structure, interacts with capsid protein VP1 and capsid protein VP3 in the mature capsid. In terms of assembly, interacts with capsid protein VP0 and capsid protein VP1 to form heterotrimeric protomers. Five protomers subsequently associate to form pentamers which serve as building blocks for the capsid. Interacts with capsid protein VP4 in the mature capsid. Interacts with protein 2C; this interaction may be important for virion morphogenesis. Interacts with capsid protein VP1 and capsid protein VP3. As to quaternary structure, homodimer. In terms of assembly, homohexamer; forms a hexameric ring structure with 6-fold symmetry characteristic of AAA+ ATPases. Interacts (via N-terminus) with host RTN3 (via reticulon domain); this interaction is important for viral replication. Interacts with capsid protein VP3; this interaction may be important for virion morphogenesis. Interacts with protein 3CD. As to quaternary structure, homodimer. Interacts with host GBF1. Interacts (via GOLD domain) with host ACBD3 (via GOLD domain); this interaction allows the formation of a viral protein 3A/ACBD3 heterotetramer with a 2:2 stoichiometry, which will stimulate the recruitment of host PI4KB in order to synthesize PI4P at the viral RNA replication sites. In terms of assembly, interacts with RNA-directed RNA polymerase. Interacts with protein 3AB and with RNA-directed RNA polymerase. As to quaternary structure, interacts with Viral protein genome-linked and with protein 3CD. Mg(2+) serves as cofactor. Specific enzymatic cleavages in vivo by the viral proteases yield processing intermediates and the mature proteins. In terms of processing, myristoylation is required for the formation of pentamers during virus assembly. Further assembly of 12 pentamers and a molecule of genomic RNA generates the provirion. Post-translationally, during virion maturation, immature virions are rendered infectious following cleavage of VP0 into VP4 and VP2. This maturation seems to be an autocatalytic event triggered by the presence of RNA in the capsid and it is followed by a conformational change infectious virion. Myristoylation is required during RNA encapsidation and formation of the mature virus particle. In terms of processing, VPg is uridylylated by the polymerase into VPg-pUpU. This acts as a nucleotide-peptide primer for the genomic RNA replication.

Its subcellular location is the virion. The protein resides in the host cytoplasm. It is found in the host cytoplasmic vesicle membrane. The protein localises to the host nucleus. It carries out the reaction a ribonucleoside 5'-triphosphate + H2O = a ribonucleoside 5'-diphosphate + phosphate + H(+). The enzyme catalyses Selective cleavage of Tyr-|-Gly bond in the picornavirus polyprotein.. It catalyses the reaction RNA(n) + a ribonucleoside 5'-triphosphate = RNA(n+1) + diphosphate. The catalysed reaction is Selective cleavage of Gln-|-Gly bond in the poliovirus polyprotein. In other picornavirus reactions Glu may be substituted for Gln, and Ser or Thr for Gly.. With respect to regulation, replication or transcription is subject to high level of random mutations by the nucleotide analog ribavirin. Its function is as follows. Forms an icosahedral capsid of pseudo T=3 symmetry with capsid proteins VP2 and VP3. The capsid is 300 Angstroms in diameter, composed of 60 copies of each capsid protein and enclosing the viral positive strand RNA genome. Capsid protein VP1 mainly forms the vertices of the capsid. Capsid protein VP1 interacts with host cell receptor to provide virion attachment to target host cells. This attachment induces virion internalization. Tyrosine kinases are probably involved in the entry process. After binding to its receptor, the capsid undergoes conformational changes. Capsid protein VP1 N-terminus (that contains an amphipathic alpha-helix) and capsid protein VP4 are externalized. Together, they shape a pore in the host membrane through which viral genome is translocated to host cell cytoplasm. Functionally, forms an icosahedral capsid of pseudo T=3 symmetry with capsid proteins VP2 and VP3. The capsid is 300 Angstroms in diameter, composed of 60 copies of each capsid protein and enclosing the viral positive strand RNA genome. Lies on the inner surface of the capsid shell. After binding to the host receptor, the capsid undergoes conformational changes. Capsid protein VP4 is released, Capsid protein VP1 N-terminus is externalized, and together, they shape a pore in the host membrane through which the viral genome is translocated into the host cell cytoplasm. In terms of biological role, component of immature procapsids, which is cleaved into capsid proteins VP4 and VP2 after maturation. Allows the capsid to remain inactive before the maturation step. Its function is as follows. Cysteine protease that cleaves viral polyprotein and specific host proteins. It is responsible for the autocatalytic cleavage between the P1 and P2 regions, which is the first cleavage occurring in the polyprotein. Also cleaves the host translation initiation factor EIF4G1, in order to shut down the capped cellular mRNA translation. Inhibits the host nucleus-cytoplasm protein and RNA trafficking by cleaving host members of the nuclear pores. Counteracts stress granule formation probably by antagonizing its assembly or promoting its dissassembly. Functionally, plays an essential role in the virus replication cycle by acting as a viroporin. Creates a pore in the host endoplasmic reticulum and as a consequence releases Ca2+ in the cytoplasm of infected cell. In turn, high levels of cytoplasmic calcium may trigger membrane trafficking and transport of viral ER-associated proteins to viroplasms, sites of viral genome replication. Induces and associates with structural rearrangements of intracellular membranes. Displays RNA-binding, nucleotide binding and NTPase activities. May play a role in virion morphogenesis and viral RNA encapsidation by interacting with the capsid protein VP3. In terms of biological role, localizes the viral replication complex to the surface of membranous vesicles. Together with protein 3CD binds the Cis-Active RNA Element (CRE) which is involved in RNA synthesis initiation. Acts as a cofactor to stimulate the activity of 3D polymerase, maybe through a nucleid acid chaperone activity. Its function is as follows. Localizes the viral replication complex to the surface of membranous vesicles. It inhibits host cell endoplasmic reticulum-to-Golgi apparatus transport and causes the disassembly of the Golgi complex, possibly through GBF1 interaction. This would result in depletion of MHC, trail receptors and IFN receptors at the host cell surface. Plays an essential role in viral RNA replication by recruiting ACBD3 and PI4KB at the viral replication sites, thereby allowing the formation of the rearranged membranous structures where viral replication takes place. Functionally, acts as a primer for viral RNA replication and remains covalently bound to viral genomic RNA. VPg is uridylylated prior to priming replication into VPg-pUpU. The oriI viral genomic sequence may act as a template for this. The VPg-pUpU is then used as primer on the genomic RNA poly(A) by the RNA-dependent RNA polymerase to replicate the viral genome. During genome replication, the VPg-RNA linkage is removed by the host TDP2, thereby accelerating replication. During the late stage of the replication cycle, host TDP2 is excluded from sites of viral RNA synthesis and encapsidation, allowing for the generation of progeny virions. Involved in the viral replication complex and viral polypeptide maturation. It exhibits protease activity with a specificity and catalytic efficiency that is different from protease 3C. Protein 3CD lacks polymerase activity. Protein 3CD binds to the 5'UTR of the viral genome. In terms of biological role, replicates the viral genomic RNA on the surface of intracellular membranes. May form linear arrays of subunits that propagate along a strong head-to-tail interaction called interface-I. Covalently attaches UMP to a tyrosine of VPg, which is used to prime RNA synthesis. The positive stranded RNA genome is first replicated at virus induced membranous vesicles, creating a dsRNA genomic replication form. This dsRNA is then used as template to synthesize positive stranded RNA genomes. ss(+)RNA genomes are either translated, replicated or encapsidated. Its function is as follows. Major viral protease that mediates proteolytic processing of the polyprotein. Cleaves host EIF5B, contributing to host translation shutoff. Also cleaves host PABPC1, contributing to host translation shutoff. Cleaves host NLRP1, triggers host N-glycine-mediated degradation of the autoinhibitory NLRP1 N-terminal fragment. This Homo sapiens (Human) protein is Genome polyprotein.